We begin with the raw amino-acid sequence, 65 residues long: Large ribosomal subunit protein bL35 (65 aa).

The protein belongs to the bacterial ribosomal protein bL35 family.

In Synechococcus sp. (strain WH7803), this protein is Large ribosomal subunit protein bL35.